The following is an 88-amino-acid chain: Cell division topological specificity factor (88 aa).

This sequence belongs to the MinE family.

Prevents the cell division inhibition by proteins MinC and MinD at internal division sites while permitting inhibition at polar sites. This ensures cell division at the proper site by restricting the formation of a division septum at the midpoint of the long axis of the cell. This chain is Cell division topological specificity factor, found in Citrobacter koseri (strain ATCC BAA-895 / CDC 4225-83 / SGSC4696).